A 481-amino-acid polypeptide reads, in one-letter code: Replication factor C large subunit (481 aa).

An ATP-binding site is contributed by 43–50; the sequence is GKPGIGKT. Basic and acidic residues-rich tracts occupy residues 408 to 433 and 441 to 457; these read KVEREKEPEPKKKGRKKAESPAKDAD and VPKEELPVKSAPEERPA. Residues 408 to 481 form a disordered region; the sequence is KVEREKEPEP…HNQSTLFDGF (74 aa). A compositionally biased stretch (polar residues) spans 471 to 481; it reads AHNQSTLFDGF.

It belongs to the activator 1 small subunits family. RfcL subfamily. As to quaternary structure, heteromultimer composed of small subunits (RfcS) and large subunits (RfcL).

Functionally, part of the RFC clamp loader complex which loads the PCNA sliding clamp onto DNA. This Methanoregula boonei (strain DSM 21154 / JCM 14090 / 6A8) protein is Replication factor C large subunit.